Reading from the N-terminus, the 266-residue chain is Undecaprenyl-diphosphatase (266 aa).

A run of 8 helical transmembrane segments spans residues 4 to 24, 46 to 66, 82 to 102, 105 to 125, 142 to 162, 182 to 202, 216 to 236, and 244 to 264; these read WLIA…PVSS, VLIQ…RLWG, IGIL…HDFI, VLYE…FILL, YPLK…VPGV, AAEF…AYDL, LIGI…KTVL, and FAPF…LLYI.

The protein belongs to the UppP family.

The protein localises to the cell inner membrane. The enzyme catalyses di-trans,octa-cis-undecaprenyl diphosphate + H2O = di-trans,octa-cis-undecaprenyl phosphate + phosphate + H(+). Its function is as follows. Catalyzes the dephosphorylation of undecaprenyl diphosphate (UPP). Confers resistance to bacitracin. The polypeptide is Undecaprenyl-diphosphatase (Caulobacter vibrioides (strain ATCC 19089 / CIP 103742 / CB 15) (Caulobacter crescentus)).